The following is a 200-amino-acid chain: Recombination protein RecR (200 aa).

Residues 60–75 (CVYCQALTEDDVCNIC) form a C4-type zinc finger. Residues 83–177 (TKLCIIESML…KISRIGFGVP (95 aa)) form the Toprim domain.

The protein belongs to the RecR family.

In terms of biological role, may play a role in DNA repair. It seems to be involved in an RecBC-independent recombinational process of DNA repair. It may act with RecF and RecO. The chain is Recombination protein RecR from Francisella tularensis subsp. holarctica (strain OSU18).